The following is a 234-amino-acid chain: Orofacial cleft 1 candidate gene 1 protein homolog (234 aa).

Disordered stretches follow at residues 1–21 and 201–234; these read MEKEKFQQKALKQTKQKKSKS and SKHHKEASHHNKKNCNPGFMSSFKDREASRWQQR. The span at 202–213 shows a compositional bias: basic residues; sequence KHHKEASHHNKK. Positions 223–234 are enriched in basic and acidic residues; sequence FKDREASRWQQR.

This is Orofacial cleft 1 candidate gene 1 protein homolog (OFCC1) from Gallus gallus (Chicken).